Consider the following 132-residue polypeptide: uncharacterized protein (132 aa).

The interval 107 to 132 is disordered; that stretch reads LNTFSGSGQKHSQPGSGQHPFSFRKD. Residues 108–122 are compositionally biased toward polar residues; it reads NTFSGSGQKHSQPGS.

This is an uncharacterized protein from Bacillus subtilis (strain 168).